We begin with the raw amino-acid sequence, 367 residues long: Glutamate 5-kinase (367 aa).

Lys10 is a binding site for ATP. Residues Ser50, Asp137, and Asn149 each contribute to the substrate site. ATP contacts are provided by residues 169 to 170 (TD) and 211 to 217 (TGGMGTK). A PUA domain is found at 275–353 (AGEITVDEGA…QQIDAILGYE (79 aa)).

This sequence belongs to the glutamate 5-kinase family.

The protein localises to the cytoplasm. It catalyses the reaction L-glutamate + ATP = L-glutamyl 5-phosphate + ADP. The protein operates within amino-acid biosynthesis; L-proline biosynthesis; L-glutamate 5-semialdehyde from L-glutamate: step 1/2. Functionally, catalyzes the transfer of a phosphate group to glutamate to form L-glutamate 5-phosphate. This is Glutamate 5-kinase from Cronobacter sakazakii (strain ATCC BAA-894) (Enterobacter sakazakii).